A 427-amino-acid chain; its full sequence is 3-phosphoshikimate 1-carboxyvinyltransferase (427 aa).

3 residues coordinate 3-phosphoshikimate: lysine 23, serine 24, and arginine 28. A phosphoenolpyruvate-binding site is contributed by lysine 23. Residues glycine 97 and arginine 125 each coordinate phosphoenolpyruvate. Residues serine 170, serine 171, glutamine 172, serine 198, aspartate 314, asparagine 337, and lysine 341 each contribute to the 3-phosphoshikimate site. Position 172 (glutamine 172) interacts with phosphoenolpyruvate. Catalysis depends on aspartate 314, which acts as the Proton acceptor. 3 residues coordinate phosphoenolpyruvate: arginine 345, arginine 387, and lysine 412.

Belongs to the EPSP synthase family. Monomer.

It is found in the cytoplasm. The catalysed reaction is 3-phosphoshikimate + phosphoenolpyruvate = 5-O-(1-carboxyvinyl)-3-phosphoshikimate + phosphate. It functions in the pathway metabolic intermediate biosynthesis; chorismate biosynthesis; chorismate from D-erythrose 4-phosphate and phosphoenolpyruvate: step 6/7. Catalyzes the transfer of the enolpyruvyl moiety of phosphoenolpyruvate (PEP) to the 5-hydroxyl of shikimate-3-phosphate (S3P) to produce enolpyruvyl shikimate-3-phosphate and inorganic phosphate. The sequence is that of 3-phosphoshikimate 1-carboxyvinyltransferase from Buchnera aphidicola subsp. Baizongia pistaciae (strain Bp).